The primary structure comprises 185 residues: Pycsar effector protein EcPycTM (185 aa).

A run of 3 helical transmembrane segments spans residues 32 to 52, 63 to 83, and 141 to 161; these read ALLL…VGYF, MVIF…SVLL, and FILS…VSWI.

It is found in the cell inner membrane. Its function is as follows. Pycsar (pyrimidine cyclase system for antiphage resistance) provides immunity against bacteriophage. The pyrimidine cyclase (PycC) synthesizes cyclic nucleotides in response to infection; these serve as specific second messenger signals. The signals activate the adjacent effector, leading to bacterial cell death and abortive phage infection. A clade E Pycsar system. The effector component of a two-gene Pycsar system. Expression of this and adjacent cytidylate cyclase EcPycC (AC P0DV24) confers resistance to bacteriophage P1 and T5; this protein is required for resistance. When cells expressing the Pycsar system are infected by phage T5 at low multiplicity of infection (0.2 MOI) the culture survives, at 2.0 MOI bacteria enter growth arrest. The same cells enter growth arrest after exposure to 250 uM cCMP but not cUMP; this effector protein responds only to cCMP, usually produced by its cognate NTP cyclase. Some of the cells treated with cCMP have abnormal membrane protrusions, probably due to effects on membrane integrity. The polypeptide is Pycsar effector protein EcPycTM (Escherichia coli).